The chain runs to 705 residues: Polyribonucleotide nucleotidyltransferase (705 aa).

2 residues coordinate Mg(2+): Asp-487 and Asp-493. A KH domain is found at 554 to 613 (PKILTMKINPDKIRDVIGPSGKQINKIIEDTGVKIDIEQDGTIFISSTEEDMNQKAKKII). The 69-residue stretch at 623–691 (GQLYLGKVKR…KQGRVNLSRK (69 aa)) folds into the S1 motif domain.

The protein belongs to the polyribonucleotide nucleotidyltransferase family. The cofactor is Mg(2+).

Its subcellular location is the cytoplasm. The enzyme catalyses RNA(n+1) + phosphate = RNA(n) + a ribonucleoside 5'-diphosphate. In terms of biological role, involved in mRNA degradation. Catalyzes the phosphorolysis of single-stranded polyribonucleotides processively in the 3'- to 5'-direction. The protein is Polyribonucleotide nucleotidyltransferase of Bacillus pumilus (strain SAFR-032).